The sequence spans 69 residues: Large ribosomal subunit protein uL29 (69 aa).

It belongs to the universal ribosomal protein uL29 family.

This Lactococcus lactis subsp. lactis (strain IL1403) (Streptococcus lactis) protein is Large ribosomal subunit protein uL29 (rpmC).